The primary structure comprises 238 residues: 14-3-3 protein 2 (238 aa).

It belongs to the 14-3-3 family.

Probable adapter protein. This Entamoeba histolytica (strain ATCC 30459 / HM-1:IMSS / ABRM) protein is 14-3-3 protein 2.